A 137-amino-acid polypeptide reads, in one-letter code: Protein MGF 110-7L (137 aa).

Positions 1–20 (MLVIILGVIGLLASSNLVSS) are cleaved as a signal peptide. Asn69, Asn70, and Asn105 each carry an N-linked (GlcNAc...) asparagine; by host glycan.

The protein belongs to the asfaviruses V110 family.

This is Protein MGF 110-7L from Ornithodoros (relapsing fever ticks).